Reading from the N-terminus, the 281-residue chain is 4-deoxy-L-threo-5-hexosulose-uronate ketol-isomerase (281 aa).

The Zn(2+) site is built by His198, His200, Glu205, and His248.

The protein belongs to the KduI family. It depends on Zn(2+) as a cofactor.

It catalyses the reaction 5-dehydro-4-deoxy-D-glucuronate = 3-deoxy-D-glycero-2,5-hexodiulosonate. It participates in glycan metabolism; pectin degradation; 2-dehydro-3-deoxy-D-gluconate from pectin: step 4/5. In terms of biological role, catalyzes the isomerization of 5-dehydro-4-deoxy-D-glucuronate to 3-deoxy-D-glycero-2,5-hexodiulosonate. This is 4-deoxy-L-threo-5-hexosulose-uronate ketol-isomerase from Levilactobacillus brevis (strain ATCC 367 / BCRC 12310 / CIP 105137 / JCM 1170 / LMG 11437 / NCIMB 947 / NCTC 947) (Lactobacillus brevis).